Reading from the N-terminus, the 1082-residue chain is RhoGEF domain-containing protein gxcI (1082 aa).

A compositionally biased stretch (polar residues) spans 1–15; that stretch reads MRKNSTSNPSPSHQF. 5 disordered regions span residues 1-29, 59-78, 91-394, 438-488, and 504-524; these read MRKN…VNNN, DKNQ…VLPQ, YNEQ…VTSL, KQAS…SVSN, and INSF…SLSL. Composition is skewed to low complexity over residues 20-29, 62-71, 96-109, 116-160, and 170-184; these read KNTTTVVNNN, QQQQQQQQQQ, PSSS…SSSP, LLST…SGSP, and PTIL…RQLP. Over residues 185–206 the composition is skewed to pro residues; the sequence is TRPPSPLPKLPSRPTSPVPPNP. Residues 211–244 show a composition bias toward low complexity; that stretch reads NTTTTNNNNNNNNNNNNNNNNNNNNNNNNNNNNN. Pro residues predominate over residues 262-276; that stretch reads PIPPPNDKPAPPPRP. A compositionally biased stretch (low complexity) spans 282-366; the sequence is TLTTPPTIAT…NNNNNSNNNK (85 aa). Residues 367–379 show a composition bias toward pro residues; sequence PLPPTSTKPPRPK. Residues 450 to 473 are compositionally biased toward low complexity; it reads SSLSLSTTPTSVSPSTPSSANPTP. The DH domain occupies 622–817; sequence SFNKVIKEII…EKIVNDINGK (196 aa). The interval 838 to 994 is PH-like; that stretch reads QQLRDQTFLK…NDIDEAINIL (157 aa). Disordered regions lie at residues 920–961 and 1017–1060; these read NNNN…NSTP and NNNN…NSNN.

In terms of biological role, GTPase-activating protein. The protein is RhoGEF domain-containing protein gxcI (gxcI) of Dictyostelium discoideum (Social amoeba).